Consider the following 467-residue polypeptide: 2-succinylbenzoate--CoA ligase (467 aa).

Belongs to the ATP-dependent AMP-binding enzyme family. MenE subfamily.

It carries out the reaction 2-succinylbenzoate + ATP + CoA = 2-succinylbenzoyl-CoA + AMP + diphosphate. Its pathway is quinol/quinone metabolism; 1,4-dihydroxy-2-naphthoate biosynthesis; 1,4-dihydroxy-2-naphthoate from chorismate: step 5/7. It functions in the pathway quinol/quinone metabolism; menaquinone biosynthesis. In terms of biological role, converts 2-succinylbenzoate (OSB) to 2-succinylbenzoyl-CoA (OSB-CoA). The chain is 2-succinylbenzoate--CoA ligase from Listeria monocytogenes serotype 4b (strain F2365).